Consider the following 212-residue polypeptide: RNA chaperone ProQ (212 aa).

Positions 107–153 are disordered; the sequence is QDKAKAKRVAQAKSANPAAKTAKKPVKKPVAKRPKQTQSSKPAKEPV. The segment covering 117–126 has biased composition (low complexity); sequence QAKSANPAAK. A compositionally biased stretch (basic residues) spans 127–141; it reads TAKKPVKKPVAKRPK.

It belongs to the ProQ family.

The protein resides in the cytoplasm. RNA chaperone with significant RNA binding, RNA strand exchange and RNA duplexing activities. The polypeptide is RNA chaperone ProQ (Shewanella halifaxensis (strain HAW-EB4)).